A 103-amino-acid polypeptide reads, in one-letter code: Spherulin-3A (103 aa).

The interval 1–13 (MSVCKGVSGNPAK) is N-terminal arm. Beta/gamma crystallin 'Greek key' domains lie at 14–55 (GEVF…KVGP) and 57–99 (TKAF…IVAT).

This sequence belongs to the beta/gamma-crystallin family.

It localises to the cytoplasm. Functionally, structural protein. The sequence is that of Spherulin-3A from Physarum polycephalum (Slime mold).